A 634-amino-acid polypeptide reads, in one-letter code: MSETVSHNKETRGFQSEVKQLLHLMIHSLYSNKEIFLRELISNASDASDKLRFQALSNPDLYEGNADLGVKLAFDESANTLTISDNGIGMSRDDVIEHLGTIAKSGTAEFFSKLSDDQSKDSQLIGQFGVGFYSAFIVADAVTVCTRAAGLAADEAVQWQSAGEGDYTVETITKDSRGTDIVLHMREEGKEFLNEWRLRDVISKYSDHIGIPVSIQTSVRDDEGKETGEKKWEQINKAQALWTRNKSEISEEEYQEFYKHVSHDFADPLTWSHNRVEGKNDYTSLLYIPAKAPWDMMNRDHKSGLKLYVQRVFIMDDAEQFMPSYMRFVRGLIDSNDLPLNVSREILQDNKVTQSLRNACTKRVLTMLDRMAKNDTEKYQSFWKEFGLVMKEGVAEDMANKEKVAGLLRFASTEVDSAEQTVGLASYVERMKEGQDKIYFLTADSYAAAKNSPHLEQFRAKGIEVILMFDRIDEWLMNYLTEFDGKQFQSITKAGLDLSKFEDEAEKEKQKETEEEFKSVVERTQSYLGDRVKEVRTTFKLATTPAVVVTDDFEMGTQMAKLLEAAGQAVPEVKYIFEINPEHALVKRMADEADEEVFGRWVEVLLGQAMLAERGSMEDPSQFVGAINKLLTKV.

Residues 1-344 are a; substrate-binding; sequence MSETVSHNKE…SNDLPLNVSR (344 aa). The segment at 345–561 is b; the sequence is EILQDNKVTQ…DFEMGTQMAK (217 aa). Positions 562 to 634 are c; it reads LLEAAGQAVP…GAINKLLTKV (73 aa).

Belongs to the heat shock protein 90 family. Homodimer.

Its subcellular location is the cytoplasm. In terms of biological role, molecular chaperone. Has ATPase activity. The chain is Chaperone protein HtpG from Vibrio campbellii (strain ATCC BAA-1116).